The sequence spans 264 residues: Undecaprenyl-diphosphatase (264 aa).

Helical transmembrane passes span 15-37 (GLTE…LLGF), 42-62 (AASF…VLYW), 84-104 (YLLF…HDFI), 108-128 (LFNP…ILIV), 143-163 (VTPK…WPGF), 182-202 (IAAE…TGYD), 217-237 (FLAV…KGFI), and 243-263 (LTLR…LFFW).

Belongs to the UppP family.

It is found in the cell inner membrane. The catalysed reaction is di-trans,octa-cis-undecaprenyl diphosphate + H2O = di-trans,octa-cis-undecaprenyl phosphate + phosphate + H(+). Its function is as follows. Catalyzes the dephosphorylation of undecaprenyl diphosphate (UPP). Confers resistance to bacitracin. This chain is Undecaprenyl-diphosphatase, found in Maridesulfovibrio salexigens (strain ATCC 14822 / DSM 2638 / NCIMB 8403 / VKM B-1763) (Desulfovibrio salexigens).